We begin with the raw amino-acid sequence, 254 residues long: CRISPR-associated endonuclease Cas1 (254 aa).

Residues Glu-78, His-146, and Glu-161 each contribute to the Mn(2+) site.

This sequence belongs to the CRISPR-associated endonuclease Cas1 family. As to quaternary structure, homodimer, forms a heterotetramer with a Cas2 homodimer. Mg(2+) is required as a cofactor. Mn(2+) serves as cofactor.

Functionally, CRISPR (clustered regularly interspaced short palindromic repeat), is an adaptive immune system that provides protection against mobile genetic elements (viruses, transposable elements and conjugative plasmids). CRISPR clusters contain spacers, sequences complementary to antecedent mobile elements, and target invading nucleic acids. CRISPR clusters are transcribed and processed into CRISPR RNA (crRNA). Acts as a dsDNA endonuclease. Involved in the integration of spacer DNA into the CRISPR cassette. The chain is CRISPR-associated endonuclease Cas1 from Leptospira interrogans serogroup Icterohaemorrhagiae serovar Lai (strain 56601).